The primary structure comprises 149 residues: D-aminoacyl-tRNA deacylase (149 aa).

A Gly-cisPro motif, important for rejection of L-amino acids motif is present at residues 139–140 (GP).

It belongs to the DTD family. Homodimer.

Its subcellular location is the cytoplasm. The catalysed reaction is glycyl-tRNA(Ala) + H2O = tRNA(Ala) + glycine + H(+). The enzyme catalyses a D-aminoacyl-tRNA + H2O = a tRNA + a D-alpha-amino acid + H(+). Its function is as follows. An aminoacyl-tRNA editing enzyme that deacylates mischarged D-aminoacyl-tRNAs. Also deacylates mischarged glycyl-tRNA(Ala), protecting cells against glycine mischarging by AlaRS. Acts via tRNA-based rather than protein-based catalysis; rejects L-amino acids rather than detecting D-amino acids in the active site. By recycling D-aminoacyl-tRNA to D-amino acids and free tRNA molecules, this enzyme counteracts the toxicity associated with the formation of D-aminoacyl-tRNA entities in vivo and helps enforce protein L-homochirality. In Schizosaccharomyces pombe (strain 972 / ATCC 24843) (Fission yeast), this protein is D-aminoacyl-tRNA deacylase (dtd1).